We begin with the raw amino-acid sequence, 475 residues long: Aspartyl/glutamyl-tRNA(Asn/Gln) amidotransferase subunit B (475 aa).

This sequence belongs to the GatB/GatE family. GatB subfamily. As to quaternary structure, heterotrimer of A, B and C subunits.

It carries out the reaction L-glutamyl-tRNA(Gln) + L-glutamine + ATP + H2O = L-glutaminyl-tRNA(Gln) + L-glutamate + ADP + phosphate + H(+). The enzyme catalyses L-aspartyl-tRNA(Asn) + L-glutamine + ATP + H2O = L-asparaginyl-tRNA(Asn) + L-glutamate + ADP + phosphate + 2 H(+). In terms of biological role, allows the formation of correctly charged Asn-tRNA(Asn) or Gln-tRNA(Gln) through the transamidation of misacylated Asp-tRNA(Asn) or Glu-tRNA(Gln) in organisms which lack either or both of asparaginyl-tRNA or glutaminyl-tRNA synthetases. The reaction takes place in the presence of glutamine and ATP through an activated phospho-Asp-tRNA(Asn) or phospho-Glu-tRNA(Gln). The protein is Aspartyl/glutamyl-tRNA(Asn/Gln) amidotransferase subunit B of Thermoanaerobacter sp. (strain X514).